Reading from the N-terminus, the 853-residue chain is Rod cGMP-specific 3',5'-cyclic phosphodiesterase subunit beta (853 aa).

The residue at position 2 (serine 2) is an N-acetylserine. GAF domains lie at 71–220 (NMER…TLNL) and 252–429 (DIER…GWSV). Residues 481–814 (EEDELGKILK…KEWKALADEY (334 aa)) form the PDEase domain. Histidine 557 serves as the catalytic Proton donor. 4 residues coordinate a divalent metal cation: histidine 561, histidine 597, aspartate 598, and aspartate 718. The residue at position 850 (cysteine 850) is a Cysteine methyl ester. A lipid anchor (S-geranylgeranyl cysteine) is attached at cysteine 850. Residues 851 to 853 (RIL) constitute a propeptide, removed in mature form.

This sequence belongs to the cyclic nucleotide phosphodiesterase family. In terms of assembly, oligomer composed of two catalytic chains (alpha and beta), an inhibitory chain (gamma) and the delta chain. A divalent metal cation is required as a cofactor.

It is found in the membrane. The protein resides in the cell projection. It localises to the cilium. The protein localises to the photoreceptor outer segment. It catalyses the reaction 3',5'-cyclic GMP + H2O = GMP + H(+). Its function is as follows. Necessary for the formation of a functional phosphodiesterase holoenzyme. Involved in retinal circadian rhythm photoentrainment via modulation of UVA and orange light-induced phase-shift of the retina clock. May participate in processes of transmission and amplification of the visual signal. In terms of biological role, rod-specific cGMP phosphodiesterase that catalyzes the hydrolysis of 3',5'-cyclic GMP. Necessary for the formation of a functional phosphodiesterase holoenzyme. Involved in retinal circadian rhythm photoentrainment via modulation of UVA and orange light-induced phase-shift of the retina clock. May participate in processes of transmission and amplification of the visual signal. In Bos taurus (Bovine), this protein is Rod cGMP-specific 3',5'-cyclic phosphodiesterase subunit beta (PDE6B).